The sequence spans 60 residues: Large ribosomal subunit protein uL30 (60 aa).

The protein belongs to the universal ribosomal protein uL30 family. In terms of assembly, part of the 50S ribosomal subunit.

This is Large ribosomal subunit protein uL30 from Levilactobacillus brevis (strain ATCC 367 / BCRC 12310 / CIP 105137 / JCM 1170 / LMG 11437 / NCIMB 947 / NCTC 947) (Lactobacillus brevis).